The sequence spans 131 residues: Ribosome-binding factor A (131 aa).

It belongs to the RbfA family. Monomer. Binds 30S ribosomal subunits, but not 50S ribosomal subunits or 70S ribosomes.

The protein resides in the cytoplasm. Functionally, one of several proteins that assist in the late maturation steps of the functional core of the 30S ribosomal subunit. Associates with free 30S ribosomal subunits (but not with 30S subunits that are part of 70S ribosomes or polysomes). Required for efficient processing of 16S rRNA. May interact with the 5'-terminal helix region of 16S rRNA. The protein is Ribosome-binding factor A of Ruegeria pomeroyi (strain ATCC 700808 / DSM 15171 / DSS-3) (Silicibacter pomeroyi).